Reading from the N-terminus, the 411-residue chain is Lissencephaly-1 homolog (411 aa).

A LisH domain is found at glutamine 9–threonine 41. The stretch at threonine 56 to alanine 83 forms a coiled coil. 7 WD repeats span residues glycine 106–lysine 147, glycine 148–lysine 187, glycine 191–threonine 230, glycine 233–glutamate 272, aspartate 275–threonine 334, glycine 337–threonine 376, and alanine 379–arginine 411.

This sequence belongs to the WD repeat LIS1/nudF family.

Its subcellular location is the cytoplasm. It localises to the cytoskeleton. It is found in the microtubule organizing center. The protein localises to the centrosome. In terms of biological role, positively regulates the activity of the minus-end directed microtubule motor protein dynein. May enhance dynein-mediated microtubule sliding by targeting dynein to the microtubule plus end. Required for several dynein- and microtubule-dependent processes. The sequence is that of Lissencephaly-1 homolog from Drosophila grimshawi (Hawaiian fruit fly).